The sequence spans 53 residues: uncharacterized protein (53 aa).

Residues 14 to 33 (SPSSLNNNNNINSKSLQINS) are compositionally biased toward low complexity. The segment at 14–53 (SPSSLNNNNNINSKSLQINSENKSKIQNNNPLGNKGGVQF) is disordered.

This is an uncharacterized protein from Dictyostelium discoideum (Social amoeba).